The primary structure comprises 743 residues: 1,4-alpha-glucan branching enzyme GlgB (743 aa).

D416 serves as the catalytic Nucleophile. Catalysis depends on E469, which acts as the Proton donor.

Belongs to the glycosyl hydrolase 13 family. GlgB subfamily. As to quaternary structure, monomer.

The enzyme catalyses Transfers a segment of a (1-&gt;4)-alpha-D-glucan chain to a primary hydroxy group in a similar glucan chain.. It functions in the pathway glycan biosynthesis; glycogen biosynthesis. Its function is as follows. Catalyzes the formation of the alpha-1,6-glucosidic linkages in glycogen by scission of a 1,4-alpha-linked oligosaccharide from growing alpha-1,4-glucan chains and the subsequent attachment of the oligosaccharide to the alpha-1,6 position. The protein is 1,4-alpha-glucan branching enzyme GlgB of Shewanella baltica (strain OS223).